A 286-amino-acid polypeptide reads, in one-letter code: Bifunctional protein FolD (286 aa).

Residues glycine 165–serine 167, serine 190, and valine 231 contribute to the NADP(+) site.

This sequence belongs to the tetrahydrofolate dehydrogenase/cyclohydrolase family. Homodimer.

It carries out the reaction (6R)-5,10-methylene-5,6,7,8-tetrahydrofolate + NADP(+) = (6R)-5,10-methenyltetrahydrofolate + NADPH. The enzyme catalyses (6R)-5,10-methenyltetrahydrofolate + H2O = (6R)-10-formyltetrahydrofolate + H(+). Its pathway is one-carbon metabolism; tetrahydrofolate interconversion. Its function is as follows. Catalyzes the oxidation of 5,10-methylenetetrahydrofolate to 5,10-methenyltetrahydrofolate and then the hydrolysis of 5,10-methenyltetrahydrofolate to 10-formyltetrahydrofolate. In Bacillus cereus (strain ATCC 10987 / NRS 248), this protein is Bifunctional protein FolD.